The following is a 100-amino-acid chain: Apolipoprotein C-II (100 aa).

The N-terminal stretch at 1-22 is a signal peptide; it reads MGSRFLLALFLILLVLGCEVQA. Positions 66–74 are lipid binding; that stretch reads SVDEKLRDM. Residues 78-100 form a lipoprotein lipase cofactor region; that stretch reads SSAAMTTYASIFTDQILTLLKGE.

It belongs to the apolipoprotein C2 family. Post-translationally, proapolipoprotein C-II is synthesized as a sialic acid containing glycoprotein which is subsequently desialylated prior to its proteolytic processing. In terms of processing, proapolipoprotein C-II, the major form found in plasma undergoes proteolytic cleavage of its N-terminal hexapeptide to generate the mature form apolipoprotein C-II, which occurs as the minor form in plasma.

It localises to the secreted. Component of chylomicrons, very low-density lipoproteins (VLDL), low-density lipoproteins (LDL), and high-density lipoproteins (HDL) in plasma. Plays an important role in lipoprotein metabolism as an activator of lipoprotein lipase. This Microtus ochrogaster (Prairie vole) protein is Apolipoprotein C-II (APOC2).